Consider the following 400-residue polypeptide: Spermatogenic leucine zipper protein 1 (400 aa).

The disordered stretch occupies residues 1–27; that stretch reads MADSDSSSEMPAHSPSPSPIPCAKQKP. At S106 the chain carries Phosphoserine. Positions 116 to 127 are helix-loop-helix motif; it reads RNKLRFKDDLFI. The basic motif stretch occupies residues 128–193; it reads HFDPERENTM…HIRGEYRKLR (66 aa). Coiled-coil stretches lie at residues 182–231 and 268–293; these read SVHI…KDIV and LIAALLENECQILQQRVDILRELHLH. Position 207 is a phosphoserine (S207). The segment at 252 to 273 is leucine-zipper; that stretch reads LEEQVKKLSQDTHSLHLIAALL. A disordered region spans residues 295–332; the sequence is AGPGHEKPLQTSGEQDKKCGEQDKKCGEQDKKCGEQDK.

Interacts with PPP1CC isoform gamma-2. In terms of processing, phosphorylated by MAPK1/ERK2 and MAPK3/ERK1.

It localises to the cytoplasm. The protein resides in the nucleus. Its function is as follows. Transcription factor that binds to the DNA sequence 5'-CANNTG-3'(E box) and the G-box motif. May play an important role in the regulation of cell proliferation and differentiation during spermatogenesis. This chain is Spermatogenic leucine zipper protein 1 (Spz1), found in Rattus norvegicus (Rat).